Reading from the N-terminus, the 148-residue chain is Putative antiporter subunit mnhG2 (148 aa).

3 consecutive transmembrane segments (helical) span residues 11-31, 51-71, and 72-92; these read IAAI…IGLI, VLLT…YLSV, and RLIL…HLIS. Residues 125 to 148 form a disordered region; that stretch reads EQLKQRAHEREERRRKTYEKEHDY. Over residues 127–148 the composition is skewed to basic and acidic residues; sequence LKQRAHEREERRRKTYEKEHDY.

It belongs to the CPA3 antiporters (TC 2.A.63) subunit G family. May form a heterooligomeric complex that consists of seven subunits: mnhA2, mnhB2, mnhC2, mnhD2, mnhE2, mnhF2 and mnhG2.

The protein resides in the cell membrane. This is Putative antiporter subunit mnhG2 (mnhG2) from Staphylococcus saprophyticus subsp. saprophyticus (strain ATCC 15305 / DSM 20229 / NCIMB 8711 / NCTC 7292 / S-41).